Here is a 455-residue protein sequence, read N- to C-terminus: F-box/FBD/LRR-repeat protein At3g51530 (455 aa).

The disordered stretch occupies residues 1–26 (MKNSERFSAAKPLMEQGGKSSRKPGF). The F-box domain occupies 29-75 (EDRISELPEVLLLQILSSLPTKLVISTSVLSKRWLSLWKMVQRLEFE). LRR repeat units follow at residues 80 to 106 (IYDF…HLKV), 155 to 182 (ETLK…HLLS), 183 to 208 (VVYK…VLRR), 227 to 257 (TLLL…GIES), 277 to 302 (IRNV…SLDL), and 325 to 351 (THKV…KLID). Residues 370–417 (KWNQPKYVPECLETFMWRNCNWGREEEKEVATYILRNARQLKKATFST) form the FBD domain.

This chain is F-box/FBD/LRR-repeat protein At3g51530, found in Arabidopsis thaliana (Mouse-ear cress).